The following is a 101-amino-acid chain: Chaperone modulatory protein CbpM (101 aa).

The protein belongs to the CbpM family.

Its function is as follows. Interacts with CbpA and inhibits both the DnaJ-like co-chaperone activity and the DNA binding activity of CbpA. Together with CbpA, modulates the activity of the DnaK chaperone system. Does not inhibit the co-chaperone activity of DnaJ. The polypeptide is Chaperone modulatory protein CbpM (Citrobacter koseri (strain ATCC BAA-895 / CDC 4225-83 / SGSC4696)).